The following is a 1153-amino-acid chain: Duffy receptor beta form (1153 aa).

Positions 1–21 (MEGKKKRPLFFLLVLLLSHKA) are cleaved as a signal peptide. The Extracellular portion of the chain corresponds to 22-1085 (NNVLFERMKG…YECFTKGSST (1064 aa)). N-linked (GlcNAc...) asparagine glycans are attached at residues N134, N179, and N202. Cystine bridges form between C214-C243 and C227-C234. N-linked (GlcNAc...) asparagine glycans are attached at residues N252 and N348. Cystine bridges form between C297–C374, C412–C429, C424–C504, and C433–C502. N-linked (GlcNAc...) asparagine glycosylation is found at N430 and N467. Disordered stretches follow at residues 520–545 (LKSA…GAEK), 565–591 (DEAA…DNIE), 612–631 (RGAT…SYSG), and 655–981 (ENSE…LYSH). Polar residues-rich tracts occupy residues 531–542 (SHSTIQPMSSSG) and 574–586 (NGNQ…NIKG). Residues N576 and N626 are each glycosylated (N-linked (GlcNAc...) asparagine). Over residues 661–675 (LETKHKIFEPSKDNS) the composition is skewed to basic and acidic residues. Over residues 677–733 (NSENSGSMEFKATSSNPITEAVESSSAEGQVQEDSAHRSVNTGRDNSTISAATSDDG) the composition is skewed to polar residues. N-linked (GlcNAc...) asparagine glycosylation occurs at N722. Over residues 791–800 (IDGKNVDIAE) the composition is skewed to basic and acidic residues. Residues 819 to 834 (TDNGNVPRSGNKQNEG) show a composition bias toward polar residues. 2 N-linked (GlcNAc...) asparagine glycosylation sites follow: N847 and N856. Over residues 867-878 (GNEKDFQKHDFM) the composition is skewed to basic and acidic residues. The span at 884–942 (NDQTSSDQTSSDQTSSNQTSSDQTSSNQTSSDQTSSDQISSDQTSSDQTSSNQTSSDQT) shows a compositional bias: low complexity. Residues N900, N910, and N935 are each glycosylated (N-linked (GlcNAc...) asparagine). Basic and acidic residues predominate over residues 945–969 (TEEHHRDNVRNPEIKSSEDMSKGDF). Residues 971–981 (RNSNSNELYSH) show a composition bias toward polar residues. A helical membrane pass occupies residues 1086–1106 (GIGIVYFATGGAFLIILLLFV). The Cytoplasmic segment spans residues 1107-1153 (SKNVASNDYEEEATFDEFVEYSDDIHRTPLMPNHIEHMQQFTPLDYS).

The protein resides in the membrane. Functionally, binds to Neu5Gc-sialylated receptors on macaque erythrocytes. This is Duffy receptor beta form from Plasmodium knowlesi.